The chain runs to 473 residues: UDP-N-acetylmuramate--L-alanine ligase (473 aa).

123–129 (GTHGKTT) lines the ATP pocket.

It belongs to the MurCDEF family.

Its subcellular location is the cytoplasm. It catalyses the reaction UDP-N-acetyl-alpha-D-muramate + L-alanine + ATP = UDP-N-acetyl-alpha-D-muramoyl-L-alanine + ADP + phosphate + H(+). It functions in the pathway cell wall biogenesis; peptidoglycan biosynthesis. Functionally, cell wall formation. In Marinomonas sp. (strain MWYL1), this protein is UDP-N-acetylmuramate--L-alanine ligase.